The following is a 169-amino-acid chain: Protein YABBY 7 (169 aa).

Residues 21 to 48 (CSFCATVLLVSVPCSSVLRVVAVQCGHC) form a C4-type zinc finger. Positions 63–122 (SASIELTPQELDAGPPPGEYSDESSGDDREGRDAEDDAPAPAAAAVANKPPGRKQRTPSA) are disordered.

Belongs to the YABBY family. As to expression, expressed in leaf sheaths and flowers.

The protein localises to the nucleus. The chain is Protein YABBY 7 (YAB7) from Oryza sativa subsp. japonica (Rice).